The chain runs to 99 residues: MAAAAASRAVGAKLGLREIRVHLCQRSPGSQGVRDFIVQRYVELKKAHPNLPILIRECSEVQPKLWARYAFGQEKTVSLNNLSADEVTRAMQNVLSGKA.

Ala-2 carries the post-translational modification N-acetylalanine. A disulfide bridge links Cys-24 with Cys-58. Residue Lys-64 is modified to N6-acetyllysine; alternate. Residue Lys-64 is modified to N6-succinyllysine; alternate. Lys-75 is modified (N6-acetyllysine).

Belongs to the complex I NDUFA2 subunit family. As to quaternary structure, complex I is composed of 45 different subunits. In terms of processing, acetylation of Lys-64 and Lys-75 is observed in liver mitochondria from fasted mice but not from fed mice.

Its subcellular location is the mitochondrion inner membrane. Its function is as follows. Accessory subunit of the mitochondrial membrane respiratory chain NADH dehydrogenase (Complex I), that is believed not to be involved in catalysis. Complex I functions in the transfer of electrons from NADH to the respiratory chain. The immediate electron acceptor for the enzyme is believed to be ubiquinone. This chain is NADH dehydrogenase [ubiquinone] 1 alpha subcomplex subunit 2 (Ndufa2), found in Mus musculus (Mouse).